A 434-amino-acid polypeptide reads, in one-letter code: Histidinol dehydrogenase (434 aa).

Ser242, Gln264, and His267 together coordinate substrate. Residues Gln264 and His267 each contribute to the Zn(2+) site. Catalysis depends on proton acceptor residues Glu332 and His333. Substrate-binding residues include His333, Asp366, Glu420, and His425. Position 366 (Asp366) interacts with Zn(2+). His425 lines the Zn(2+) pocket.

Belongs to the histidinol dehydrogenase family. Zn(2+) serves as cofactor.

It catalyses the reaction L-histidinol + 2 NAD(+) + H2O = L-histidine + 2 NADH + 3 H(+). Its pathway is amino-acid biosynthesis; L-histidine biosynthesis; L-histidine from 5-phospho-alpha-D-ribose 1-diphosphate: step 9/9. Functionally, catalyzes the sequential NAD-dependent oxidations of L-histidinol to L-histidinaldehyde and then to L-histidine. This is Histidinol dehydrogenase from Desulfotalea psychrophila (strain LSv54 / DSM 12343).